A 678-amino-acid chain; its full sequence is ABC transporter F family member 2 (678 aa).

2 ABC transporter domains span residues valine 84–tyrosine 342 and valine 411–leucine 626. ATP-binding positions include glycine 116–threonine 123 and glycine 443–serine 450. The interval alanine 630–asparagine 678 is disordered. Positions arginine 653–asparagine 678 are enriched in basic residues.

The protein belongs to the ABC transporter superfamily. ABCF family. EF3 (TC 3.A.1.121) subfamily.

This is ABC transporter F family member 2 (ABCF2) from Arabidopsis thaliana (Mouse-ear cress).